Here is a 101-residue protein sequence, read N- to C-terminus: Small ribosomal subunit protein uS14 (101 aa).

It belongs to the universal ribosomal protein uS14 family. As to quaternary structure, part of the 30S ribosomal subunit. Contacts proteins S3 and S10.

Its function is as follows. Binds 16S rRNA, required for the assembly of 30S particles and may also be responsible for determining the conformation of the 16S rRNA at the A site. The sequence is that of Small ribosomal subunit protein uS14 from Haemophilus influenzae (strain PittGG).